The following is a 715-amino-acid chain: Fatty acid oxidation complex subunit alpha (715 aa).

The tract at residues 1–190 is enoyl-CoA hydratase; that stretch reads MTTTSAFMLN…KAGLVDDVVP (190 aa). Residues 306-715 form a 3-hydroxyacyl-CoA dehydrogenase region; the sequence is GPLNSVGILG…WTNGETDQGN (410 aa).

The protein in the N-terminal section; belongs to the enoyl-CoA hydratase/isomerase family. In the central section; belongs to the 3-hydroxyacyl-CoA dehydrogenase family. Heterotetramer of two alpha chains (FadJ) and two beta chains (FadI).

It localises to the cytoplasm. The enzyme catalyses a (3S)-3-hydroxyacyl-CoA = a (2E)-enoyl-CoA + H2O. It catalyses the reaction a 4-saturated-(3S)-3-hydroxyacyl-CoA = a (3E)-enoyl-CoA + H2O. The catalysed reaction is a (3S)-3-hydroxyacyl-CoA + NAD(+) = a 3-oxoacyl-CoA + NADH + H(+). It carries out the reaction (3S)-3-hydroxybutanoyl-CoA = (3R)-3-hydroxybutanoyl-CoA. It functions in the pathway lipid metabolism; fatty acid beta-oxidation. Its function is as follows. Catalyzes the formation of a hydroxyacyl-CoA by addition of water on enoyl-CoA. Also exhibits 3-hydroxyacyl-CoA epimerase and 3-hydroxyacyl-CoA dehydrogenase activities. In Salmonella newport (strain SL254), this protein is Fatty acid oxidation complex subunit alpha.